A 363-amino-acid polypeptide reads, in one-letter code: Chorismate synthase (363 aa).

The interval 44 to 63 is disordered; the sequence is DLDRRKPGTSRHTTQRQEPD. Residues Arg48 and Arg54 each contribute to the NADP(+) site. FMN contacts are provided by residues 125 to 127, 237 to 238, Gly277, 292 to 296, and Arg318; these read RSS, NA, and KPTSS.

It belongs to the chorismate synthase family. As to quaternary structure, homotetramer. Requires FMNH2 as cofactor.

The catalysed reaction is 5-O-(1-carboxyvinyl)-3-phosphoshikimate = chorismate + phosphate. Its pathway is metabolic intermediate biosynthesis; chorismate biosynthesis; chorismate from D-erythrose 4-phosphate and phosphoenolpyruvate: step 7/7. Catalyzes the anti-1,4-elimination of the C-3 phosphate and the C-6 proR hydrogen from 5-enolpyruvylshikimate-3-phosphate (EPSP) to yield chorismate, which is the branch point compound that serves as the starting substrate for the three terminal pathways of aromatic amino acid biosynthesis. This reaction introduces a second double bond into the aromatic ring system. The polypeptide is Chorismate synthase (Pseudomonas fluorescens (strain ATCC BAA-477 / NRRL B-23932 / Pf-5)).